The sequence spans 245 residues: 1-(5-phosphoribosyl)-5-[(5-phosphoribosylamino)methylideneamino] imidazole-4-carboxamide isomerase (245 aa).

Aspartate 7 acts as the Proton acceptor in catalysis. The active-site Proton donor is the aspartate 129.

This sequence belongs to the HisA/HisF family.

It is found in the cytoplasm. The catalysed reaction is 1-(5-phospho-beta-D-ribosyl)-5-[(5-phospho-beta-D-ribosylamino)methylideneamino]imidazole-4-carboxamide = 5-[(5-phospho-1-deoxy-D-ribulos-1-ylimino)methylamino]-1-(5-phospho-beta-D-ribosyl)imidazole-4-carboxamide. It functions in the pathway amino-acid biosynthesis; L-histidine biosynthesis; L-histidine from 5-phospho-alpha-D-ribose 1-diphosphate: step 4/9. In Buchnera aphidicola subsp. Cinara cedri (strain Cc), this protein is 1-(5-phosphoribosyl)-5-[(5-phosphoribosylamino)methylideneamino] imidazole-4-carboxamide isomerase.